A 257-amino-acid chain; its full sequence is UPF0246 protein lpg1366 (257 aa).

This sequence belongs to the UPF0246 family.

The chain is UPF0246 protein lpg1366 from Legionella pneumophila subsp. pneumophila (strain Philadelphia 1 / ATCC 33152 / DSM 7513).